Consider the following 104-residue polypeptide: L-rhamnose mutarotase (104 aa).

Substrate is bound at residue Tyr18. Catalysis depends on His22, which acts as the Proton donor. Substrate is bound by residues Tyr41 and 76-77 (WW).

This sequence belongs to the rhamnose mutarotase family. As to quaternary structure, homodimer.

Its subcellular location is the cytoplasm. The catalysed reaction is alpha-L-rhamnose = beta-L-rhamnose. The protein operates within carbohydrate metabolism; L-rhamnose metabolism. Involved in the anomeric conversion of L-rhamnose. This is L-rhamnose mutarotase from Shouchella clausii (strain KSM-K16) (Alkalihalobacillus clausii).